A 193-amino-acid polypeptide reads, in one-letter code: MSQVWTAELRTEEGKGASRRLRHAGKVPAIIYGGDVDAKSIALKSNQIERALKLDVDLYNSVLTLEGAGDAENCIIKDLQRHPATGFITHIDFQRASDKAMVTKRVPLKFKGKESSPGVKMGGLMSFMQTTVEVSCLAKDLPTAIDVDVSELEAGTNLRLSQLTLPKGVKLTALTHGNTDYDQAVVGISKVKR.

It belongs to the bacterial ribosomal protein bL25 family. CTC subfamily. Part of the 50S ribosomal subunit; part of the 5S rRNA/L5/L18/L25 subcomplex. Contacts the 5S rRNA. Binds to the 5S rRNA independently of L5 and L18.

In terms of biological role, this is one of the proteins that binds to the 5S RNA in the ribosome where it forms part of the central protuberance. This is Large ribosomal subunit protein bL25 from Hydrogenovibrio crunogenus (strain DSM 25203 / XCL-2) (Thiomicrospira crunogena).